The chain runs to 214 residues: N-(5'-phosphoribosyl)anthranilate isomerase (214 aa).

The protein belongs to the TrpF family.

The enzyme catalyses N-(5-phospho-beta-D-ribosyl)anthranilate = 1-(2-carboxyphenylamino)-1-deoxy-D-ribulose 5-phosphate. Its pathway is amino-acid biosynthesis; L-tryptophan biosynthesis; L-tryptophan from chorismate: step 3/5. The protein is N-(5'-phosphoribosyl)anthranilate isomerase of Haloarcula marismortui (strain ATCC 43049 / DSM 3752 / JCM 8966 / VKM B-1809) (Halobacterium marismortui).